A 212-amino-acid polypeptide reads, in one-letter code: Major fimbrial subunit (212 aa).

The first 18 residues, 1–18, serve as a signal peptide directing secretion; that stretch reads MKKTLLGSLILLAFATNA. Cysteine 42 and cysteine 82 are joined by a disulfide.

It belongs to the fimbrial protein family.

It localises to the fimbrium. Mediates adherence to oropharyngeal epithelial cells. Helps the airway colonization process. The polypeptide is Major fimbrial subunit (hifA) (Haemophilus influenzae).